The sequence spans 366 residues: Ribonuclease P protein subunit drpp30 (366 aa).

Residues 265-366 (EDTQPTNNNI…DIDNNKRKRE (102 aa)) are disordered. Residues 275–290 (PHEKHINKESTGKETI) show a composition bias toward basic and acidic residues. 2 stretches are compositionally biased toward low complexity: residues 291–324 (PKPTTTTTTTTTTTTTAKTKTPTPTPTTEKTPSI) and 333–351 (TAKSNKKTTTNTTSTAQKQ). A compositionally biased stretch (basic and acidic residues) spans 352 to 366 (GKMDIDIDNNKRKRE).

This sequence belongs to the eukaryotic/archaeal RNase P protein component 3 family.

Its subcellular location is the nucleus. It carries out the reaction Endonucleolytic cleavage of RNA, removing 5'-extranucleotides from tRNA precursor.. In terms of biological role, component of ribonuclease P, a protein complex that generates mature tRNA molecules by cleaving their 5'-ends. The chain is Ribonuclease P protein subunit drpp30 (drpp30) from Dictyostelium discoideum (Social amoeba).